A 62-amino-acid polypeptide reads, in one-letter code: Toxin Tst2 (62 aa).

An LCN-type CS-alpha/beta domain is found at 1–62; sequence KEGYAMDHEG…KVWDYATNKC (62 aa). Disulfide bonds link Cys11/Cys62, Cys15/Cys38, Cys23/Cys43, and Cys27/Cys45. The residue at position 62 (Cys62) is a Cysteine amide.

Expressed by the venom gland.

Its subcellular location is the secreted. Its function is as follows. Alpha toxins bind voltage-independently at site-3 of sodium channels (Nav) and inhibit the inactivation of the activated channels, thereby blocking neuronal transmission. Is toxic to mice. In Tityus stigmurus (Brazilian scorpion), this protein is Toxin Tst2.